Reading from the N-terminus, the 453-residue chain is MKGFTKHSILMACSIGLAINATAADWDNIPIPAELDAGQSWELQQNYSDSFNYSGKNSTFTGKWKDSYFHSWTGPGLTHWSSDESWVGDGNLIISASRRQGTNKVNAGVITSKTKVKYPIFLEASIKVSNLELSSNFWLLSENDQREIDVLEVYGGARQDWYAKNMSTNFHVFFRNNDNSIKNDYNDQTHFTPTWGNYWRDGFHRFGVYWKSPTDVTFYIDGQKTTKGAWSQVVMKDKDYTGAILDKSRYNMDQEAFIIIDTEDHSWRSEAGHIATDADLADSDKNKMYVDWIRVYKPTGGSTTPPTGDITPPSGYTNLQLAHSNRCVDVINGALWNGSTYQQYSCNTGNNNQRFKFTKIANNQYSINAKVSQLCMELASGSSANGAKVQQWICNHANSNQTWSLEDKGSNTFEIRNKQSGKCLEVANSSNANGGQIRQWACTGATNQRFKFL.

The first 23 residues, 1–23, serve as a signal peptide directing secretion; sequence MKGFTKHSILMACSIGLAINATA. In terms of domain architecture, GH16 spans 24–301; the sequence is ADWDNIPIPA…WIRVYKPTGG (278 aa). E147 acts as the Nucleophile in catalysis. E152 (proton donor) is an active-site residue. Positions 313-453 constitute a Ricin B-type lectin domain; sequence PSGYTNLQLA…GATNQRFKFL (141 aa). Cystine bridges form between C327/C346, C375/C394, and C423/C442.

This sequence belongs to the glycosyl hydrolase 16 family.

The protein localises to the secreted. It catalyses the reaction Hydrolysis of (1-&gt;4)-beta-D-galactosidic linkages in agarose, giving the tetramer as the predominant product.. The protein is Beta-agarase AgaB34 of Agarivorans albus.